We begin with the raw amino-acid sequence, 324 residues long: Meiotic recombination protein DLH1 (324 aa).

112–119 (GEFRCGKT) contacts ATP. Arg-214 provides a ligand contact to dsDNA. SsDNA is bound by residues Arg-214, Tyr-217, Arg-220, Arg-226, and Arg-296. Positions 220 and 226 each coordinate dsDNA.

This sequence belongs to the RecA family. DMC1 subfamily. As to quaternary structure, double stacked ring-shaped homooctamer.

The protein resides in the nucleus. Required for meiotic recombination, synaptonemal complex formation and cell cycle progression. The protein is Meiotic recombination protein DLH1 (DLH1) of Candida albicans (Yeast).